The primary structure comprises 738 residues: 1,4-alpha-glucan branching enzyme GlgB (738 aa).

D417 (nucleophile) is an active-site residue. The active-site Proton donor is E472.

This sequence belongs to the glycosyl hydrolase 13 family. GlgB subfamily. Monomer.

It catalyses the reaction Transfers a segment of a (1-&gt;4)-alpha-D-glucan chain to a primary hydroxy group in a similar glucan chain.. It participates in glycan biosynthesis; glycogen biosynthesis. Its function is as follows. Catalyzes the formation of the alpha-1,6-glucosidic linkages in glycogen by scission of a 1,4-alpha-linked oligosaccharide from growing alpha-1,4-glucan chains and the subsequent attachment of the oligosaccharide to the alpha-1,6 position. This chain is 1,4-alpha-glucan branching enzyme GlgB, found in Burkholderia pseudomallei (strain 1106a).